We begin with the raw amino-acid sequence, 609 residues long: MEGPSLRGPALRLAGLPTQQDCNIQEKIDLEIRMREGIWKLLSLSTQKDQVLHAVKNLMVCNARLMAYTSELQKLEEQIANQTGRCDVKFESKERTACKGKIAISDIRIPLMWKDSDHFSNKERSRRYAIFCLFKMGANVFDTDVVNVDKTITDICFENVTIFNEAGPDFQIKVEVYSCCTEESSITNTPKKLAKKLKTSISKATGKKISSVLQEEDDEMCLLLSSAVFGVKYNLLAHTTLTLESAEDSFKTHNLSINGNEESSFWLPLYGNMCCRLVAQPACMAEDAFAGFLNQQQMVEGLISWRRLYCVLRGGKLYCFYSPEEIEAKVEPALVVPINKETRIRAMDKDAKKRIHNFSVINPVPGQAITQIFAVDNREDLQKWMEAFWQHFFDLSQWKHCCEELMKIEIMSPRKPPLFLTKEATSVYHDMSIDSPMKLESLTDIIQKKIEETNGQFLIGQHEESLPPPWATLFDGNHQMVIQKKVLYPASEPLHDEKGKKRQAPLPPSDKLPFSLKSQSNTDQLVKDNWGKTSVSQTSSLDTKLSTLMHHLQKPMAAPRKLLPARRNRLSDGEHTDTKTNFEAKPVPAPRQKSIKDILDPRSWLQAQV.

The REM-1 domain maps to 5–81 (SLRGPALRLA…LQKLEEQIAN (77 aa)). The stretch at 56 to 91 (KNLMVCNARLMAYTSELQKLEEQIANQTGRCDVKFE) forms a coiled coil. In terms of domain architecture, PH spans 286-393 (EDAFAGFLNQ…WMEAFWQHFF (108 aa)). 2 disordered regions span residues 495 to 520 (HDEKGKKRQAPLPPSDKLPFSLKSQS) and 554 to 609 (KPMA…QAQV). Positions 569–582 (RLSDGEHTDTKTNF) are enriched in basic and acidic residues.

Expressed in lymphocytes, CD4 positive T-cells and bone marrow-derived cells. Also expressed in lung, colon, thymus and brain.

Functionally, may play an important role in lymphopoiesis. The protein is Rhotekin-2 (RTKN2) of Homo sapiens (Human).